Reading from the N-terminus, the 172-residue chain is Large ribosomal subunit protein bL9 (172 aa).

The protein belongs to the bacterial ribosomal protein bL9 family.

Binds to the 23S rRNA. This chain is Large ribosomal subunit protein bL9, found in Chlamydia abortus (strain DSM 27085 / S26/3) (Chlamydophila abortus).